A 226-amino-acid chain; its full sequence is tRNA (guanine-N(7)-)-methyltransferase (226 aa).

The S-adenosyl-L-methionine site is built by D59, E84, and D111. Position 169 (D169) interacts with substrate.

It belongs to the class I-like SAM-binding methyltransferase superfamily. TrmB family.

It catalyses the reaction guanosine(46) in tRNA + S-adenosyl-L-methionine = N(7)-methylguanosine(46) in tRNA + S-adenosyl-L-homocysteine. It participates in tRNA modification; N(7)-methylguanine-tRNA biosynthesis. Catalyzes the formation of N(7)-methylguanine at position 46 (m7G46) in tRNA. This is tRNA (guanine-N(7)-)-methyltransferase from Chloroherpeton thalassium (strain ATCC 35110 / GB-78).